Reading from the N-terminus, the 239-residue chain is uncharacterized protein (239 aa).

Residues methionine 1–serine 19 form the signal peptide. N-linked (GlcNAc...) asparagine glycosylation is found at asparagine 44, asparagine 58, asparagine 72, asparagine 92, asparagine 109, asparagine 136, asparagine 172, asparagine 192, and asparagine 213.

Its subcellular location is the secreted. This is an uncharacterized protein from Caenorhabditis elegans.